We begin with the raw amino-acid sequence, 394 residues long: GPI transamidase component GAB1 (394 aa).

Residues 1 to 135 (MDSTALKVAL…TLLSCISRSS (135 aa)) lie on the Cytoplasmic side of the membrane. Residues 136-156 (IIFTNFAISSSLYCILAEGNV) form a helical membrane-spanning segment. Residues 157–160 (LLSS) lie on the Lumenal side of the membrane. The helical transmembrane segment at 161–181 (VMISISGYLSVYPILLLIPLL) threads the bilayer. Residues 182-190 (GMLKSWRQR) are Cytoplasmic-facing. Residues 191-211 (ILSAIVSILSLLILLLFSYSI) traverse the membrane as a helical segment. Over 212 to 224 (LGSQSWSFLTQVY) the chain is Lumenal. The chain crosses the membrane as a helical span at residues 225–245 (GSIITFEKVFPNLGLWWYFFI). Residues 235–255 (PNLGLWWYFFIEMFDTFIPFF) are may be involved in recognition of long-chain fatty acids in GPI. Residues 246–250 (EMFDT) lie on the Cytoplasmic side of the membrane. The chain crosses the membrane as a helical span at residues 251-271 (FIPFFKAVFNIFIAVFITPFT). Residues 272 to 297 (LRYHKQPFYAFILCIGWIVLTKPYPS) lie on the Lumenal side of the membrane. Residues 298-318 (LGDAGFFFSFLPFFTPLFGYL) traverse the membrane as a helical segment. Residues 319-324 (RYPIIS) lie on the Cytoplasmic side of the membrane. Residues 325–345 (ALLFLHAIVLAPIFYHLWVVL) form a helical membrane-spanning segment. Residues 346 to 351 (GSGNSN) lie on the Lumenal side of the membrane. A helical transmembrane segment spans residues 352–372 (FFYAISLVYALAIASILVDLN). Topologically, residues 373–394 (WAMLRIEYDNGIPNFKLKVTQI) are cytoplasmic.

It belongs to the PIGU family. In terms of assembly, forms a complex with GPI16, GPI17, GPI8 and GAA1.

The protein resides in the endoplasmic reticulum membrane. It functions in the pathway glycolipid biosynthesis; glycosylphosphatidylinositol-anchor biosynthesis. Functionally, component of the GPI transamidase complex. May be involved in the recognition of either the GPI attachment signal or the lipid portion of GPI. In Saccharomyces cerevisiae (strain ATCC 204508 / S288c) (Baker's yeast), this protein is GPI transamidase component GAB1 (GAB1).